Here is a 347-residue protein sequence, read N- to C-terminus: tRNA pseudouridine synthase D (347 aa).

Asp-81 functions as the Nucleophile in the catalytic mechanism. One can recognise a TRUD domain in the interval 158–304 (GVPNYFGNQR…MRHDRRAIAL (147 aa)).

It belongs to the pseudouridine synthase TruD family.

It carries out the reaction uridine(13) in tRNA = pseudouridine(13) in tRNA. In terms of biological role, responsible for synthesis of pseudouridine from uracil-13 in transfer RNAs. The polypeptide is tRNA pseudouridine synthase D (Vibrio vulnificus (strain CMCP6)).